The primary structure comprises 342 residues: MLTNPSQVIIRNQETLSQHKVLVLNHEADSLPKALLDVAQSVDALALDYHHYLHLAPQANAKLRCYFGHQLPHQDKYDTVIVYFPKAKPLAPYLFNLAAQHLVADGQLLVVGENKGGVKSLVKLLPKYFATGVKLDNARHCLLFGSSLIDTAPEIKLSDWTSQYQLATPQGNITICNLVGVFSEKHLDQGTELLLSHLPTLSGRVLDFGCGAGVIAAALLKAQPTLSLECIDINAMALASCELTLAANGMTAKVYPSDGLAQTSGKFDGIISNPPFHDGLASTTSIAQSFVADSAKQLQSKGIWQIVANRHLPYSDTIAAEFGQLTVPAENNKYKLYSFQQA.

The protein belongs to the methyltransferase superfamily. RsmC family. In terms of assembly, monomer.

The protein resides in the cytoplasm. The enzyme catalyses guanosine(1207) in 16S rRNA + S-adenosyl-L-methionine = N(2)-methylguanosine(1207) in 16S rRNA + S-adenosyl-L-homocysteine + H(+). In terms of biological role, specifically methylates the guanine in position 1207 of 16S rRNA in the 30S particle. The polypeptide is Ribosomal RNA small subunit methyltransferase C (Shewanella sp. (strain MR-4)).